We begin with the raw amino-acid sequence, 276 residues long: Syntaxin-12 (276 aa).

S2 is subject to N-acetylserine. The Cytoplasmic portion of the chain corresponds to 2–248; sequence SYGPLDMYRN…RAAYYQKKSR (247 aa). The stretch at 33–131 forms a coiled coil; it reads IQRISQATAQ…RRVSEKEKES (99 aa). Phosphoserine occurs at positions 139, 142, 218, and 225. In terms of domain architecture, t-SNARE coiled-coil homology spans 178-240; it reads LELIKERETA…ERATEQLQRA (63 aa). The helical; Anchor for type IV membrane protein transmembrane segment at 249-269 threads the bilayer; it reads KKMCILVLVLSVIIVILGLII. Residues 270-276 are Vesicular-facing; that stretch reads WLVYKTK.

This sequence belongs to the syntaxin family. Associates with the BLOC-1 complex. Interacts with BLOC1S6. Interacts with NAPA and SNAP23. Identified in a complex containing STX6, STX12, VAMP4 and VTI1A. Interacts with GRIPAP1. Forms a complex with GRIP1, GRIA2 and NSG1; controls the intracellular fate of AMPAR and the endosomal sorting of the GRIA2 subunit toward recycling and membrane targeting. Interacts with NSG1. Interacts with TPC1. Interacts (via N-terminus) with VPS13B.

It is found in the endosome membrane. It localises to the golgi apparatus membrane. The protein resides in the endomembrane system. Its subcellular location is the early endosome membrane. The protein localises to the recycling endosome membrane. In terms of biological role, SNARE promoting fusion of transport vesicles with target membranes. Together with SNARE STX6, promotes movement of vesicles from endosomes to the cell membrane, and may therefore function in the endocytic recycling pathway. Through complex formation with GRIP1, GRIA2 and NSG1 controls the intracellular fate of AMPAR and the endosomal sorting of the GRIA2 subunit toward recycling and membrane targeting. The protein is Syntaxin-12 (STX12) of Pongo abelii (Sumatran orangutan).